The following is an 800-amino-acid chain: MSEIIQDLSLEDVIGDRFGRYSKYIIQERALPDVRDGLKPVQRRILFAMYSSGNTYDKNFRKSAKTVGDVIGQYHPHGDSSVYDAMVRLSQDWKLRHVLIEMHGNNGSIDNDPPAAMRYTEAKLSQLSEELLRDINKETVSFIPNYDDTTLEPMVLPARFPNLLINGSTGISSGYATDIPPHNLAEVIQGTLKYIDQPDITINQLMKYIKGPDFPTGGIIQGIEGIKKAYETGKGKVVVRSRVDEEPLRSGRKQLIVTEIPYEVNKSSLVKKIDELRADKKVDGIVEVRDETDRTGLRIAIELKKDANSESIKNYLYKNSDLQISYNFNMVAISEGRPKLMGLREIIESYLNHQIEVVTNRTRYDLEQAEKRMHIVEGLMKALSILDEVIALIRNSKNKKDAKDNLVAEYDFTEAQAEAIVMLQLYRLTNTDIEALKKEHEELEALIKELRNILDNHEALLAVIKDELNEIKKKFKVDRLSTIEAEISEIKIDKEVMVPSEEVILSLTQHGYIKRTSTRSFNASGVTEIGLKDGDRLLKHESVNTQDTVLVFTNKGRYLFIPVHKLADIRWKELGQHISQIVPIDEDEEVVNVYNEKDFKNEAFYIMATKNGMIKKSSASQFKTTRFNKPLINMKVKDKDELINVVRLESDQLITVLTHKGMSLTYSTNELSDTGLRAAGVKSINLKDEDYVVMTEDVNDSDSIIMVTQRGAMKRIDFNVLQEAKRAQRGITLLKELKKKPHRIVAGAVVKENHTKYIVFSQHHEEYGNIDDVHLSEQYTNGSFIIDTDDFGEVESMILE.

The region spanning 31-496 (LPDVRDGLKP…ISEIKIDKEV (466 aa)) is the Topo IIA-type catalytic domain. The O-(5'-phospho-DNA)-tyrosine intermediate role is filled by Y119.

Belongs to the type II topoisomerase GyrA/ParC subunit family. ParC type 2 subfamily. In terms of assembly, heterotetramer composed of ParC and ParE.

The protein localises to the cell membrane. The catalysed reaction is ATP-dependent breakage, passage and rejoining of double-stranded DNA.. Topoisomerase IV is essential for chromosome segregation. It relaxes supercoiled DNA. Performs the decatenation events required during the replication of a circular DNA molecule. This Staphylococcus epidermidis (strain ATCC 12228 / FDA PCI 1200) protein is DNA topoisomerase 4 subunit A.